We begin with the raw amino-acid sequence, 208 residues long: Large ribosomal subunit protein uL4 (208 aa).

The disordered stretch occupies residues Arg-44–Ile-89. Basic residues predominate over residues Gly-60–Gly-71.

This sequence belongs to the universal ribosomal protein uL4 family. As to quaternary structure, part of the 50S ribosomal subunit.

One of the primary rRNA binding proteins, this protein initially binds near the 5'-end of the 23S rRNA. It is important during the early stages of 50S assembly. It makes multiple contacts with different domains of the 23S rRNA in the assembled 50S subunit and ribosome. In terms of biological role, forms part of the polypeptide exit tunnel. This Chlorobium phaeobacteroides (strain BS1) protein is Large ribosomal subunit protein uL4.